The primary structure comprises 921 residues: Probable TonB-dependent receptor NMB1497 (921 aa).

A signal peptide spans 1–25 (MRSSFRLKPICFYLMGVTLYHYSYA). Positions 53-174 (DKKVFTDARA…LAGSANLRTL (122 aa)) constitute a TBDR plug domain. The TBDR beta-barrel domain maps to 185–921 (TYGLLLKGLT…TFLMTMSYKF (737 aa)). Residues 904 to 921 (LTNFARGRTFLMTMSYKF) carry the TonB C-terminal box motif.

The protein belongs to the TonB-dependent receptor family.

The protein resides in the cell outer membrane. Functionally, probable receptor, TonB-dependent. This is Probable TonB-dependent receptor NMB1497 from Neisseria meningitidis serogroup B (strain ATCC BAA-335 / MC58).